The following is a 562-amino-acid chain: MKETLSSKVPTTRTVGVTFDSVSESKSKLKSGSVQGTTATATATGPPSPPSSYVIKCLLKTARFMWQVTTIPAKIGDTLGTLYRYAQDSVDTFLCVAGKARRKERDGDQNSTDTKLYLEESVLERKLPEADLKALVDLPAGLDYNEWLASHTLALFEHVNLVYGTISEFCTQSGCADMTGPGNRTYLWFDEKGKKTRVAAPQYIDYVMTFTQKTVSDESIFPTKYANEFPGSFESIARKILRLQFHVIAHLYAAHFREIALLGLHTHLNLTFAHLTALHRRFNLIDEKETDVLRDLEVALRLTDDTSGQDSSSSVHEHSSSSSSPPVQHQQHQHQQQHNNSSSTSNSTSPAEALHVNSQSNSNSHSNSSNSHTTTASASASLIDGDSAAPPICTQPEAGAGCKPAGSSGLLGGILGDLTSGEFGDTTRYCTSAVPQAAASSSASAAGPGADGAASAALNNGAGALHLNFSNNNNNNHNLNHLNHHHHHHHHQHHHQHHPHGHHGHQGHQGHQGHHQAPASTTVPHSGLIQCNAAGAVGASAGGGGNAVSAATGGATSASSTA.

A disordered region spans residues 30-50 (KSGSVQGTTATATATGPPSPP). Residues 31 to 45 (SGSVQGTTATATATG) are compositionally biased toward low complexity. The Zn(2+) site is built by Cys-170, Cys-175, His-250, and His-255. Disordered regions lie at residues 304 to 378 (DDTS…TASA), 468 to 523 (NFSN…STTV), and 538 to 562 (GASA…SSTA). Low complexity-rich tracts occupy residues 305-349 (DTSG…NSTS), 357-378 (NSQS…TASA), and 471-481 (NNNNNNHNLNH). Positions 482-514 (LNHHHHHHHHQHHHQHHPHGHHGHQGHQGHQGH) are enriched in basic residues. A compositionally biased stretch (low complexity) spans 547–562 (AVSAATGGATSASSTA).

This sequence belongs to the MOB1/phocein family. As to quaternary structure, interacts with and activates trc, also interacts with wts.

It localises to the cytoplasm. The protein resides in the nucleus. Required for the normal morphogenesis of a variety of polarized outgrowths including epidermal hairs, bristles, arista laterals, and dendrites. The polypeptide is MOB kinase activator-like 2 (Drosophila pseudoobscura pseudoobscura (Fruit fly)).